The chain runs to 267 residues: 4-hydroxy-tetrahydrodipicolinate reductase (267 aa).

NAD(+) is bound by residues 12 to 17 (GPRGRM), 100 to 102 (GTT), and 126 to 129 (APNF). The active-site Proton donor/acceptor is His-156. His-157 contacts (S)-2,3,4,5-tetrahydrodipicolinate. Lys-160 (proton donor) is an active-site residue. Position 166 to 167 (166 to 167 (GT)) interacts with (S)-2,3,4,5-tetrahydrodipicolinate.

This sequence belongs to the DapB family.

It is found in the cytoplasm. The enzyme catalyses (S)-2,3,4,5-tetrahydrodipicolinate + NAD(+) + H2O = (2S,4S)-4-hydroxy-2,3,4,5-tetrahydrodipicolinate + NADH + H(+). It catalyses the reaction (S)-2,3,4,5-tetrahydrodipicolinate + NADP(+) + H2O = (2S,4S)-4-hydroxy-2,3,4,5-tetrahydrodipicolinate + NADPH + H(+). Its pathway is amino-acid biosynthesis; L-lysine biosynthesis via DAP pathway; (S)-tetrahydrodipicolinate from L-aspartate: step 4/4. Its function is as follows. Catalyzes the conversion of 4-hydroxy-tetrahydrodipicolinate (HTPA) to tetrahydrodipicolinate. The polypeptide is 4-hydroxy-tetrahydrodipicolinate reductase (Bacillus subtilis (strain 168)).